Consider the following 333-residue polypeptide: Trans-1,2-dihydrobenzene-1,2-diol dehydrogenase (333 aa).

The protein belongs to the Gfo/Idh/MocA family. As to quaternary structure, homodimer.

The enzyme catalyses (1R,2R)-1,2-dihydrobenzene-1,2-diol + NADP(+) = catechol + NADPH + H(+). It carries out the reaction D-xylose + NADP(+) = D-xylono-1,5-lactone + NADPH + H(+). This Mus musculus (Mouse) protein is Trans-1,2-dihydrobenzene-1,2-diol dehydrogenase (Dhdh).